The chain runs to 935 residues: Isoleucine--tRNA ligase (935 aa).

The 'HIGH' region motif lies at P58–H68. Residue E558 participates in L-isoleucyl-5'-AMP binding. The 'KMSKS' region motif lies at K599–S603. K602 serves as a coordination point for ATP. Residues C897, C900, C917, and C920 each contribute to the Zn(2+) site.

This sequence belongs to the class-I aminoacyl-tRNA synthetase family. IleS type 1 subfamily. In terms of assembly, monomer. It depends on Zn(2+) as a cofactor.

It is found in the cytoplasm. The catalysed reaction is tRNA(Ile) + L-isoleucine + ATP = L-isoleucyl-tRNA(Ile) + AMP + diphosphate. In terms of biological role, catalyzes the attachment of isoleucine to tRNA(Ile). As IleRS can inadvertently accommodate and process structurally similar amino acids such as valine, to avoid such errors it has two additional distinct tRNA(Ile)-dependent editing activities. One activity is designated as 'pretransfer' editing and involves the hydrolysis of activated Val-AMP. The other activity is designated 'posttransfer' editing and involves deacylation of mischarged Val-tRNA(Ile). The chain is Isoleucine--tRNA ligase from Francisella tularensis subsp. tularensis (strain WY96-3418).